Here is a 324-residue protein sequence, read N- to C-terminus: Lactonase drp35 (324 aa).

10 residues coordinate Ca(2+): Glu-47, Ser-109, Gly-111, Asp-129, Thr-132, Tyr-134, Asp-137, Asn-184, Asp-235, and Ser-236. The Proton donor role is filled by Asp-235.

This sequence belongs to the SMP-30/CGR1 family. It depends on Ca(2+) as a cofactor.

It localises to the cytoplasm. Exhibits lactonase activity. Acts in cells with perturbed membrane integrity and is possibly related to the membrane homeostasis. The chain is Lactonase drp35 (drp35) from Staphylococcus aureus (strain MW2).